The following is a 922-amino-acid chain: Phosphoenolpyruvate carboxylase (922 aa).

The segment at 1-20 is disordered; the sequence is MTKTLHARPSAATDTTFAPP. Active-site residues include H142 and K581.

The protein belongs to the PEPCase type 1 family. Mg(2+) is required as a cofactor.

The catalysed reaction is oxaloacetate + phosphate = phosphoenolpyruvate + hydrogencarbonate. Its function is as follows. Forms oxaloacetate, a four-carbon dicarboxylic acid source for the tricarboxylic acid cycle. This is Phosphoenolpyruvate carboxylase (ppc) from Methylorubrum extorquens (strain ATCC 14718 / DSM 1338 / JCM 2805 / NCIMB 9133 / AM1) (Methylobacterium extorquens).